We begin with the raw amino-acid sequence, 231 residues long: LexA repressor (231 aa).

The segment at residues 26 to 46 (FEEMKEALDLKSKSGIHRLIG) is a DNA-binding region (H-T-H motif). Catalysis depends on for autocatalytic cleavage activity residues serine 152 and lysine 190.

Belongs to the peptidase S24 family. Homodimer.

It carries out the reaction Hydrolysis of Ala-|-Gly bond in repressor LexA.. Its function is as follows. Represses a number of genes involved in the response to DNA damage (SOS response), including recA and lexA. In the presence of single-stranded DNA, RecA interacts with LexA causing an autocatalytic cleavage which disrupts the DNA-binding part of LexA, leading to derepression of the SOS regulon and eventually DNA repair. The chain is LexA repressor from Acidiphilium cryptum (strain JF-5).